Reading from the N-terminus, the 91-residue chain is Small ribosomal subunit protein uS19 (91 aa).

This sequence belongs to the universal ribosomal protein uS19 family.

In terms of biological role, protein S19 forms a complex with S13 that binds strongly to the 16S ribosomal RNA. The chain is Small ribosomal subunit protein uS19 from Erythrobacter litoralis (strain HTCC2594).